A 66-amino-acid polypeptide reads, in one-letter code: MRASLFIVIFVVSFITISCLSTDDEEARWIEKRGDCLPHLKLCKADKDCCSKKCKRRGTNPEKRCR.

The first 21 residues, 1–21, serve as a signal peptide directing secretion; it reads MRASLFIVIFVVSFITISCLS. Residues 22–33 constitute a propeptide that is removed on maturation; that stretch reads TDDEEARWIEKR. Cystine bridges form between Cys-36–Cys-50, Cys-43–Cys-54, and Cys-49–Cys-65. The tract at residues 55–57 is essential for stimulation of [3H]ryanodine binding to RYR1; that stretch reads KRR.

This sequence belongs to the scorpion calcin family. In terms of tissue distribution, expressed by the venom gland.

It is found in the secreted. Functionally, this toxin stabilizes ryanodine receptor 1 (RyR1) opening in a long-lasting subconductance state (20% and 38% of the full conductance state have been found). It promotes an increase in the opening probability at intermediate concentration. Furthermore, it triggers calcium release from sarcoplasmic vesicles (68 nM are enough to induce a sharp release, and 45% of the total calcium is released after toxin (100 nM) addition) probably by acting as a cell-penetrating peptide (CPP). In addition, it has been shown to dose-dependently stimulate ryanodine binding to RyR1 (EC(50)=6.9-71 nM). It also augments the bell-shaped calcium-[3H]ryanodine binding curve that is maximal at about 10 uM calcium concentration. It binds a different site as ryanodine. It acts synergistically with caffeine. In vivo, intracerebroventricular injection into mice induces neurotoxic symptoms, followed by death. The protein is Hemicalcin of Hemiscorpius lepturus (Scorpion).